A 170-amino-acid polypeptide reads, in one-letter code: Putative zinc finger protein 542 (170 aa).

Positions 1–42 constitute a KRAB domain; that stretch reads MLENYQNLVWLGLSISKSVISLLEKRKLPWIMAKEEIRGPLP. 2 consecutive C2H2-type zinc fingers follow at residues 98–120 and 126–148; these read NVCK…KRNH and NQCL…QRIH. Residues 154–170 form a C2H2-type 3; degenerate zinc finger; it reads YKCNECIKTFNQRAHLT.

The protein belongs to the krueppel C2H2-type zinc-finger protein family.

The protein resides in the nucleus. In terms of biological role, may be involved in transcriptional regulation. The polypeptide is Putative zinc finger protein 542 (ZNF542P) (Homo sapiens (Human)).